Here is a 186-residue protein sequence, read N- to C-terminus: MSFIFCDGDKDKLVDFLSRKDSWSDIELTLTNGSEKKILYVHKNILKNCRYFEGTFSFYENSYEYDNIEIEVPHINIACDIIYLFYGIELPESTDWKYKIHLHLLQEFFLLQPISVSDLKIPENDFEILINEIISFGHTDQIVKLIFNNMPESYDVGKIPQDILEIIFNSNKKIYQILDKIKNAIH.

This is an uncharacterized protein from Acanthamoeba polyphaga mimivirus (APMV).